The chain runs to 252 residues: Adenosylcobinamide-GDP ribazoletransferase (252 aa).

A run of 7 helical transmembrane segments spans residues leucine 36 to valine 56, phenylalanine 59 to isoleucine 79, valine 109 to threonine 129, proline 133 to valine 153, serine 170 to leucine 192, glycine 199 to threonine 218, and isoleucine 228 to leucine 248.

Belongs to the CobS family. The cofactor is Mg(2+).

Its subcellular location is the cell membrane. The catalysed reaction is alpha-ribazole + adenosylcob(III)inamide-GDP = adenosylcob(III)alamin + GMP + H(+). It carries out the reaction alpha-ribazole 5'-phosphate + adenosylcob(III)inamide-GDP = adenosylcob(III)alamin 5'-phosphate + GMP + H(+). Its pathway is cofactor biosynthesis; adenosylcobalamin biosynthesis; adenosylcobalamin from cob(II)yrinate a,c-diamide: step 7/7. Its function is as follows. Joins adenosylcobinamide-GDP and alpha-ribazole to generate adenosylcobalamin (Ado-cobalamin). Also synthesizes adenosylcobalamin 5'-phosphate from adenosylcobinamide-GDP and alpha-ribazole 5'-phosphate. The protein is Adenosylcobinamide-GDP ribazoletransferase of Clostridium acetobutylicum (strain ATCC 824 / DSM 792 / JCM 1419 / IAM 19013 / LMG 5710 / NBRC 13948 / NRRL B-527 / VKM B-1787 / 2291 / W).